Reading from the N-terminus, the 213-residue chain is GTP cyclohydrolase 1 (213 aa).

Residues Met-1–Glu-27 form a disordered region. 3 residues coordinate Zn(2+): Cys-100, His-103, and Cys-172.

The protein belongs to the GTP cyclohydrolase I family. As to quaternary structure, homomer.

It carries out the reaction GTP + H2O = 7,8-dihydroneopterin 3'-triphosphate + formate + H(+). The protein operates within cofactor biosynthesis; 7,8-dihydroneopterin triphosphate biosynthesis; 7,8-dihydroneopterin triphosphate from GTP: step 1/1. In Beijerinckia indica subsp. indica (strain ATCC 9039 / DSM 1715 / NCIMB 8712), this protein is GTP cyclohydrolase 1.